The following is a 90-amino-acid chain: Small ribosomal subunit protein uS15c (90 aa).

It belongs to the universal ribosomal protein uS15 family. Part of the 30S ribosomal subunit.

The protein resides in the plastid. It is found in the chloroplast. The protein is Small ribosomal subunit protein uS15c (rps15) of Buxus microphylla (Littleleaf boxwood).